A 353-amino-acid chain; its full sequence is D-alanine--D-alanine ligase A (353 aa).

Residues Lys141–Ala346 form the ATP-grasp domain. Position 169–224 (Glu169–Glu224) interacts with ATP. Mg(2+) contacts are provided by Asp300, Glu313, and Asn315.

It belongs to the D-alanine--D-alanine ligase family. Mg(2+) is required as a cofactor. It depends on Mn(2+) as a cofactor.

Its subcellular location is the cytoplasm. The enzyme catalyses 2 D-alanine + ATP = D-alanyl-D-alanine + ADP + phosphate + H(+). The protein operates within cell wall biogenesis; peptidoglycan biosynthesis. Functionally, cell wall formation. This is D-alanine--D-alanine ligase A from Brucella suis biovar 1 (strain 1330).